A 155-amino-acid polypeptide reads, in one-letter code: Ribonuclease H (155 aa).

The RNase H type-1 domain occupies 1 to 142 (MLKQVEIFTD…CDELARAAAS (142 aa)). Mg(2+) is bound by residues Asp10, Glu48, Asp70, and Asp134.

Belongs to the RNase H family. As to quaternary structure, monomer. Mg(2+) is required as a cofactor.

The protein localises to the cytoplasm. It carries out the reaction Endonucleolytic cleavage to 5'-phosphomonoester.. Endonuclease that specifically degrades the RNA of RNA-DNA hybrids. The protein is Ribonuclease H of Klebsiella pneumoniae subsp. pneumoniae (strain ATCC 700721 / MGH 78578).